The primary structure comprises 399 residues: Elongation factor Tu (399 aa).

One can recognise a tr-type G domain in the interval 10–204 (KPHVNIGTIG…AVDASIPEPE (195 aa)). Residues 19 to 26 (GHVDHGKT) form a G1 region. Residue 19 to 26 (GHVDHGKT) participates in GTP binding. Residue Thr-26 participates in Mg(2+) binding. The G2 stretch occupies residues 60-64 (GITIN). Residues 81-84 (DCPG) form a G3 region. Residues 81 to 85 (DCPGH) and 136 to 139 (NKCD) each bind GTP. Positions 136–139 (NKCD) are G4. The segment at 174 to 176 (SGL) is G5.

It belongs to the TRAFAC class translation factor GTPase superfamily. Classic translation factor GTPase family. EF-Tu/EF-1A subfamily. In terms of assembly, monomer.

It is found in the cytoplasm. The catalysed reaction is GTP + H2O = GDP + phosphate + H(+). GTP hydrolase that promotes the GTP-dependent binding of aminoacyl-tRNA to the A-site of ribosomes during protein biosynthesis. This Prochlorococcus marinus (strain NATL1A) protein is Elongation factor Tu.